The primary structure comprises 122 residues: MIQMQSLLKVADNTGARTVMCIKVLGGSKRRFAGIGDVIKVAVKDAAPRGRIKRGEVYNAVIVRTAKGIRRADGSLVKFDTNAAVILNNKLEPIGTRIFGPVTRELRTAKFMKIVSLAPEVI.

The protein belongs to the universal ribosomal protein uL14 family. Part of the 50S ribosomal subunit. Forms a cluster with proteins L3 and L19. In the 70S ribosome, L14 and L19 interact and together make contacts with the 16S rRNA in bridges B5 and B8.

Functionally, binds to 23S rRNA. Forms part of two intersubunit bridges in the 70S ribosome. This chain is Large ribosomal subunit protein uL14, found in Nitrosomonas europaea (strain ATCC 19718 / CIP 103999 / KCTC 2705 / NBRC 14298).